The primary structure comprises 141 residues: Cystatin (141 aa).

Residues 1–26 form the signal peptide; it reads MVHSQLPVAAPLRLLCALLLLPSATM. The region spanning 29-129 is the Cystatin domain; the sequence is GGLYPRSVTD…CHFQVWSRPW (101 aa). The Secondary area of contact motif lies at 73-77; it reads QVVTG. 2 disulfides stabilise this stretch: Cys-91/Cys-107 and Cys-120/Cys-140.

This sequence belongs to the cystatin family. As to expression, expressed by the venom gland at an extremely low level (at protein level).

It is found in the secreted. In terms of biological role, inhibits various C1 cysteine proteases including cathepsin L, papain and cathepsin B. This protein has no toxic activity and its function in the venom is unknown. It may play a role as a housekeeping or regulatory protein. The protein is Cystatin of Tropidechis carinatus (Australian rough-scaled snake).